The primary structure comprises 642 residues: tRNA uridine 5-carboxymethylaminomethyl modification enzyme MnmG (642 aa).

FAD is bound by residues 12–17 (GAGHAG), Val-124, and Ser-179. 272 to 286 (GPRYCPSIEDKITRF) lines the NAD(+) pocket. Residue Gln-369 coordinates FAD.

It belongs to the MnmG family. Homodimer. Heterotetramer of two MnmE and two MnmG subunits. FAD serves as cofactor.

The protein localises to the cytoplasm. Functionally, NAD-binding protein involved in the addition of a carboxymethylaminomethyl (cmnm) group at the wobble position (U34) of certain tRNAs, forming tRNA-cmnm(5)s(2)U34. In Bdellovibrio bacteriovorus (strain ATCC 15356 / DSM 50701 / NCIMB 9529 / HD100), this protein is tRNA uridine 5-carboxymethylaminomethyl modification enzyme MnmG.